The following is a 408-amino-acid chain: Imidazolonepropionase (408 aa).

2 residues coordinate Fe(3+): His-73 and His-75. Zn(2+) is bound by residues His-73 and His-75. Arg-82, Tyr-145, and His-178 together coordinate 4-imidazolone-5-propanoate. Tyr-145 lines the N-formimidoyl-L-glutamate pocket. His-243 contributes to the Fe(3+) binding site. Residue His-243 coordinates Zn(2+). Gln-246 contributes to the 4-imidazolone-5-propanoate binding site. Position 318 (Asp-318) interacts with Fe(3+). Residue Asp-318 participates in Zn(2+) binding. Residues Asn-320 and Gly-322 each coordinate N-formimidoyl-L-glutamate. Residue Ser-323 participates in 4-imidazolone-5-propanoate binding.

It belongs to the metallo-dependent hydrolases superfamily. HutI family. It depends on Zn(2+) as a cofactor. Fe(3+) serves as cofactor.

It is found in the cytoplasm. The catalysed reaction is 4-imidazolone-5-propanoate + H2O = N-formimidoyl-L-glutamate. The protein operates within amino-acid degradation; L-histidine degradation into L-glutamate; N-formimidoyl-L-glutamate from L-histidine: step 3/3. Functionally, catalyzes the hydrolytic cleavage of the carbon-nitrogen bond in imidazolone-5-propanoate to yield N-formimidoyl-L-glutamate. It is the third step in the universal histidine degradation pathway. The chain is Imidazolonepropionase from Shewanella sp. (strain MR-4).